A 977-amino-acid polypeptide reads, in one-letter code: Probable UDP-N-acetylglucosamine--peptide N-acetylglucosaminyltransferase SEC (977 aa).

TPR repeat units lie at residues 2–35 (ISSK…SVSS), 53–86 (DDAR…NPLR), 87–120 (TDNL…QPQF), 121–154 (AECY…RPNF), 155–188 (ADAW…NPLL), 189–222 (VDAH…QPTF), 223–256 (AIAW…KPAF), 257–290 (PDAY…RPNS), 291–324 (AMAF…DPRF), 325–358 (LEAY…QPNH), 359–392 (PQAM…TTGL), 393–426 (SAPF…DPLA), 427–460 (ADAL…RPTM), and 461–494 (AEAH…RPDF). The interval 495–977 (PEATCNLLHT…ENDLEFPHDR (483 aa)) is catalytic region.

This sequence belongs to the glycosyltransferase 41 family. O-GlcNAc transferase subfamily. In terms of assembly, interacts with TCP14 and TCP15. Interacts with ATX1.

The enzyme catalyses L-seryl-[protein] + UDP-N-acetyl-alpha-D-glucosamine = 3-O-(N-acetyl-beta-D-glucosaminyl)-L-seryl-[protein] + UDP + H(+). The catalysed reaction is L-threonyl-[protein] + UDP-N-acetyl-alpha-D-glucosamine = 3-O-(N-acetyl-beta-D-glucosaminyl)-L-threonyl-[protein] + UDP + H(+). Its pathway is protein modification; protein glycosylation. Its function is as follows. O-linked N-acetylglucosamine transferase (OGT) that mediates O-glycosylation of capsid protein (CP) of virus in case of infection by Plum pox virus. OGTs catalyze the addition of nucleotide-activated sugars directly onto the polypeptide through O-glycosidic linkage with the hydroxyl of serine or threonine. Probably acts by adding O-linked sugars to yet unknown proteins. Its OGT activity has been proved in vitro but not in vivo. Required with SPY for gamete and seed development. Mediates O-glycosylation of the DELLA protein RGA, a repressor of the gibberellin (GA) signaling pathway. O-glycosylation by SEC inhibits RGA binding to four of its interactors PIF3, PIF4, JAZ1, and BZR1 that are key regulators in light, jasmonate, and brassinosteroid signaling pathways, respectively. Activates ATX1 through O-GlcNAc modification to augment ATX1-mediated H3K4me3 histone epigenetic modification at FLC locus, thus preventing premature flowering. This Arabidopsis thaliana (Mouse-ear cress) protein is Probable UDP-N-acetylglucosamine--peptide N-acetylglucosaminyltransferase SEC.